Reading from the N-terminus, the 102-residue chain is Co-chaperonin GroES (102 aa).

Belongs to the GroES chaperonin family. As to quaternary structure, heptamer of 7 subunits arranged in a ring. Interacts with the chaperonin GroEL.

The protein resides in the cytoplasm. Its function is as follows. Together with the chaperonin GroEL, plays an essential role in assisting protein folding. The GroEL-GroES system forms a nano-cage that allows encapsulation of the non-native substrate proteins and provides a physical environment optimized to promote and accelerate protein folding. GroES binds to the apical surface of the GroEL ring, thereby capping the opening of the GroEL channel. This Vibrio harveyi (Beneckea harveyi) protein is Co-chaperonin GroES.